Consider the following 261-residue polypeptide: Lys-63-specific deubiquitinase BRCC36 (261 aa).

One can recognise an MPN domain in the interval 6–149 (VHIQGDAFLV…YTCFQSVQAQ (144 aa)). 3 residues coordinate Zn(2+): His-92, His-94, and Asp-105. Residues 92 to 105 (HSHPHITVWPSHVD) carry the JAMM motif motif.

It belongs to the peptidase M67A family. BRCC36 subfamily. In terms of assembly, component of the BRCA1-A complex, at least composed of brca1, bard1, uimc1/rap80, abraxas1, brcc3/brcc36, babam2 and babam1/nba1. In the BRCA1-A complex, interacts directly with ABRAXAS1 and babam2. Component of the BRISC complex, at least composed of ABRAXAS2, brcc3/brcc36, babam2 and babam1/nba1. Within the complex, interacts directly with abraxas2. Both the BRCA1-A complex and the BRISC complex bind polyubiquitin. Zn(2+) is required as a cofactor.

The protein localises to the nucleus. Its subcellular location is the cytoplasm. It localises to the cytoskeleton. It is found in the spindle pole. Metalloprotease that specifically cleaves 'Lys-63'-linked polyubiquitin chains. Does not have activity toward 'Lys-48'-linked polyubiquitin chains. Component of the BRCA1-A complex, a complex that specifically recognizes 'Lys-63'-linked ubiquitinated histones H2A and H2AX at DNA lesions sites, leading to target the brca1-bard1 heterodimer to sites of DNA damage at double-strand breaks (DSBs). In the BRCA1-A complex, it specifically removes 'Lys-63'-linked ubiquitin on histones H2A and H2AX, antagonizing the rnf8-dependent ubiquitination at double-strand breaks (DSBs). Catalytic subunit of the BRISC complex, a multiprotein complex that specifically cleaves 'Lys-63'-linked ubiquitin in various substrates. Mediates the specific 'Lys-63'-specific deubiquitination associated with the COP9 signalosome complex (CSN), via the interaction of the BRISC complex with the CSN complex. The BRISC complex is required for normal mitotic spindle assembly and microtubule attachment to kinetochores via its role in deubiquitinating numa1. Plays a role in interferon signaling via its role in the deubiquitination of the interferon receptor ifnar1; deubiquitination increases ifnar1 activity by enhancing its stability and cell surface expression. Acts as a regulator of the NLRP3 inflammasome by mediating deubiquitination of nlrp3. Down-regulates the response to bacterial lipopolysaccharide (LPS) via its role in ifnar1 deubiquitination. This is Lys-63-specific deubiquitinase BRCC36 (brcc3) from Xenopus laevis (African clawed frog).